The chain runs to 1231 residues: STE20-like serine/threonine-protein kinase (1231 aa).

Ser14 is subject to Phosphoserine. The 259-residue stretch at 34 to 292 folds into the Protein kinase domain; that stretch reads WETIGELGDG…TSQLLQHPFV (259 aa). Residues 40–48 and Lys63 each bind ATP; that span reads LGDGAFGKV. Catalysis depends on Asp155, which acts as the Proton acceptor. Thr183 carries the phosphothreonine modification. Position 189 is a phosphoserine (Ser189). The interval 309 to 351 is disordered; it reads AEVTEEVEDGKEEDDDEEIENSLPIPTNKRASSDLSIASSEED. A compositionally biased stretch (acidic residues) spans 312-328; sequence TEEVEDGKEEDDDEEIE. Phosphoserine is present on residues Ser330, Ser340, Ser341, Ser344, Ser347, Ser348, Ser354, and Ser372. Polar residues predominate over residues 337-347; it reads KRASSDLSIAS. The interval 405–478 is disordered; that stretch reads PDRATELPES…KQPVLENKLV (74 aa). 2 stretches are compositionally biased toward basic and acidic residues: residues 407-428 and 446-478; these read RATE…RLPD and DHAV…NKLV. A Phosphoserine modification is found at Ser507. Positions 516–531 are enriched in basic and acidic residues; the sequence is THEKLRKDDTTQKDVI. Residues 516 to 757 form a disordered region; sequence THEKLRKDDT…TGSTADNSSI (242 aa). 2 positions are modified to phosphoserine: Ser536 and Ser554. Positions 601–613 are enriched in basic and acidic residues; the sequence is TDQKLVENTHEKQ. Residues 615–624 show a composition bias toward polar residues; sequence PISSETTLDT. Ser641 and Ser661 each carry phosphoserine. Positions 641–660 are enriched in acidic residues; the sequence is STEEVEVEGAVSETDEEDVQ. Positions 683–692 are enriched in low complexity; that stretch reads EAPAQVEVQV. Over residues 693–706 the composition is skewed to pro residues; sequence PVPPQPSEPPPAPI. Ser775 carries the phosphoserine modification. Position 810 is a phosphothreonine (Thr810). Ser814 is subject to Phosphoserine. Positions 822-1065 form a coiled coil; that stretch reads LRRQELRELR…LKNRQTQERA (244 aa). The 36-residue stretch at 871–906 folds into the UVR domain; sequence DQEIENLEKQQKQTIERLEQEHTNRLRDEAKRIKGE. Thr1093 carries the post-translational modification Phosphothreonine. The stretch at 1105–1179 forms a coiled coil; sequence SAQEEKRQKN…ELKEWREKLR (75 aa).

The protein belongs to the protein kinase superfamily. STE Ser/Thr protein kinase family. STE20 subfamily. In terms of processing, proteolytically cleaved by caspase-3. Autophosphorylated. In terms of tissue distribution, ubiquitously expressed.

The protein resides in the cytoplasm. The enzyme catalyses L-seryl-[protein] + ATP = O-phospho-L-seryl-[protein] + ADP + H(+). It catalyses the reaction L-threonyl-[protein] + ATP = O-phospho-L-threonyl-[protein] + ADP + H(+). Functionally, mediates apoptosis and actin stress fiber dissolution. The protein is STE20-like serine/threonine-protein kinase (SLK) of Cavia porcellus (Guinea pig).